A 320-amino-acid polypeptide reads, in one-letter code: Biotin synthase 2 (320 aa).

In terms of domain architecture, Radical SAM core spans 34-261; it reads NVVQCSKLLS…ASYVRLSAGR (228 aa). The [4Fe-4S] cluster site is built by C49, C53, and C56. The [2Fe-2S] cluster site is built by C93, C124, C184, and R256.

It belongs to the radical SAM superfamily. Biotin synthase family. In terms of assembly, homodimer. Requires [4Fe-4S] cluster as cofactor. The cofactor is [2Fe-2S] cluster.

It carries out the reaction (4R,5S)-dethiobiotin + (sulfur carrier)-SH + 2 reduced [2Fe-2S]-[ferredoxin] + 2 S-adenosyl-L-methionine = (sulfur carrier)-H + biotin + 2 5'-deoxyadenosine + 2 L-methionine + 2 oxidized [2Fe-2S]-[ferredoxin]. The protein operates within cofactor biosynthesis; biotin biosynthesis; biotin from 7,8-diaminononanoate: step 2/2. Its function is as follows. Catalyzes the conversion of dethiobiotin (DTB) to biotin by the insertion of a sulfur atom into dethiobiotin via a radical-based mechanism. In Paracoccus denitrificans (strain Pd 1222), this protein is Biotin synthase 2.